Here is a 316-residue protein sequence, read N- to C-terminus: Transaldolase 2 (316 aa).

Residue K131 is the Schiff-base intermediate with substrate of the active site.

Belongs to the transaldolase family. Type 1 subfamily. Homodimer.

The protein localises to the cytoplasm. It catalyses the reaction D-sedoheptulose 7-phosphate + D-glyceraldehyde 3-phosphate = D-erythrose 4-phosphate + beta-D-fructose 6-phosphate. The protein operates within carbohydrate degradation; pentose phosphate pathway; D-glyceraldehyde 3-phosphate and beta-D-fructose 6-phosphate from D-ribose 5-phosphate and D-xylulose 5-phosphate (non-oxidative stage): step 2/3. Functionally, transaldolase is important for the balance of metabolites in the pentose-phosphate pathway. This Salmonella paratyphi A (strain ATCC 9150 / SARB42) protein is Transaldolase 2.